Consider the following 356-residue polypeptide: HTH-type transcriptional regulator AglR (356 aa).

The region spanning M1 to T57 is the HTH lacI-type domain. A DNA-binding region (H-T-H motif) is located at residues L5 to N24. The segment at T337–A356 is disordered.

Its function is as follows. Probable regulatory protein for the binding-protein-dependent transport system for alpha-glucosides such as sucrose, maltose and trehalose. The chain is HTH-type transcriptional regulator AglR (aglR) from Rhizobium meliloti (strain 1021) (Ensifer meliloti).